We begin with the raw amino-acid sequence, 882 residues long: DNA replication helicase (882 aa).

The interval 1-29 (MAAAGGERQLDGQKPGPPHLQQPGDRPAV) is disordered. Residue 97–104 (GNAGSGKS) participates in ATP binding.

Belongs to the herpesviridae helicase family. Associates with the primase and the primase-associated factor to form the helicase-primase complex.

It is found in the host nucleus. Component of the helicase/primase complex. Unwinds the DNA at the replication forks and generates single-stranded DNA for both leading and lagging strand synthesis. The primase synthesizes short RNA primers on the lagging strand that the polymerase elongates using dNTPs. Possesses helicase-like motifs and therefore may act as the helicase subunit of the complex. In Homo sapiens (Human), this protein is DNA replication helicase.